A 157-amino-acid polypeptide reads, in one-letter code: S-ribosylhomocysteine lyase (157 aa).

The Fe cation site is built by His54, His58, and Cys126.

Belongs to the LuxS family. As to quaternary structure, homodimer. It depends on Fe cation as a cofactor.

The catalysed reaction is S-(5-deoxy-D-ribos-5-yl)-L-homocysteine = (S)-4,5-dihydroxypentane-2,3-dione + L-homocysteine. Functionally, involved in the synthesis of autoinducer 2 (AI-2) which is secreted by bacteria and is used to communicate both the cell density and the metabolic potential of the environment. The regulation of gene expression in response to changes in cell density is called quorum sensing. Catalyzes the transformation of S-ribosylhomocysteine (RHC) to homocysteine (HC) and 4,5-dihydroxy-2,3-pentadione (DPD). This is S-ribosylhomocysteine lyase from Bacillus cytotoxicus (strain DSM 22905 / CIP 110041 / 391-98 / NVH 391-98).